The chain runs to 722 residues: Cellulose synthase-like protein G2 (722 aa).

2 helical membrane passes run 25–45 and 51–71; these read IYAV…VHSI and TLIT…WATT. Active-site residues include aspartate 139 and aspartate 437. The next 6 helical transmembrane spans lie at 514-534, 548-568, 583-605, 635-655, 660-680, and 702-722; these read FWPF…VALI, FWLY…DFLL, WMVR…TLNL, PSSS…LAFM, GIFT…FAVV, and ICFL…FFLK.

Belongs to the glycosyltransferase 2 family. Plant cellulose synthase-like G subfamily. Expressed in young seedlings, primarily in the vascular tissue.

The protein localises to the golgi apparatus membrane. In terms of biological role, thought to be a Golgi-localized beta-glycan synthase that polymerize the backbones of noncellulosic polysaccharides (hemicelluloses) of plant cell wall. The protein is Cellulose synthase-like protein G2 (CSLG2) of Arabidopsis thaliana (Mouse-ear cress).